Reading from the N-terminus, the 406-residue chain is MAADRDNFLQNIENDSINNGQAMDLSPNRSSSESDSSILMNVNDIKTLRLDVAPEAKSTQSKKSLFYENSDDAEEGEIEERTNKEEGQYHHKGSKQLRFEVGKESTGKLQSHLSDGSATSGEGNVRPWEFRKVIQAEYRERLPRNYELKHWKKPSKIMIGSILRLLETNTVSALDSVFEKYEKEMNQMTHGDNNEVKRIYSKKERLLEIILTKIKKKLRQAKFPSRISERDLDIEYIYSKRQFIQNRYSQELQNNERLEAILSREQNLLEETRKLCMNLKTNNKKRLTEKLIQKDLHPVLNKAMEYTYGLESTNGFMHPDGPVTFRNDSHELNLMLNDPIKSTADVRLDKEEVLSLLPSLKEYTKKSKELKETMGQMISDSHEEEIKEVFVPHHESHQDKTEEDIH.

2 disordered regions span residues 1–37 (MAAD…SDSS) and 59–122 (TQSK…TSGE). Over residues 8–21 (FLQNIENDSINNGQ) the composition is skewed to polar residues. The span at 26-37 (SPNRSSSESDSS) shows a compositional bias: low complexity. Acidic residues predominate over residues 69-78 (NSDDAEEGEI). S70 bears the Phosphoserine mark. 2 stretches are compositionally biased toward basic and acidic residues: residues 79–89 (EERTNKEEGQY) and 97–106 (LRFEVGKEST). A compositionally biased stretch (polar residues) spans 107-122 (GKLQSHLSDGSATSGE). Positions 239–285 (SKRQFIQNRYSQELQNNERLEAILSREQNLLEETRKLCMNLKTNNKK) form a coiled coil. The tract at residues 317-340 (MHPDGPVTFRNDSHELNLMLNDPI) is CTF19-MCM21 binding motif. Residues 353-400 (VLSLLPSLKEYTKKSKELKETMGQMISDSHEEEIKEVFVPHHESHQDK) form an interaction with NKP1-NKP2 region. The segment at 379–406 (SDSHEEEIKEVFVPHHESHQDKTEEDIH) is disordered. Residues 380–406 (DSHEEEIKEVFVPHHESHQDKTEEDIH) are compositionally biased toward basic and acidic residues.

This sequence belongs to the CENP-Q/OKP1 family. In terms of assembly, component of the heterotetrameric kinetochore subcomplex COMA, which consists of AME1, CTF19, MCM21 and OKP1. The COMA subcomplex is part of a larger constitutive centromere-associated network (CCAN) (also known as central kinetochore CTF19 complex in yeast), which is composed of at least AME1, CHL4, CNN1, CTF3, CTF19, IML3, MCM16, MCM21, MCM22, MHF1, MHF2, MIF2, NKP1, NKP2, OKP1 and WIP1. COMA binds the centromeric nucleosome-binding protein MIF2, and to the outer kinetochore MIND subcomplex. OKP1 interacts directly with AME1, with an NKP1-NKP2 dimer, and with CTF19-MCM21.

It is found in the nucleus. The protein resides in the chromosome. It localises to the centromere. Its subcellular location is the kinetochore. Component of the kinetochore, a multiprotein complex that assembles on centromeric DNA and attaches chromosomes to spindle microtubules, mediating chromosome segregation and sister chromatid segregation during meiosis and mitosis. Component of the inner kinetochore COMA complex, which connects centromere-associated proteins and the outer kinetochore. COMA interacts with other inner kinetochore proteins to form the inner kinetochore constitutive centromere-associated network (CCAN), which serves as a structural platform for outer kinetochore assembly. The chain is Inner kinetochore subunit OKP1 from Saccharomyces cerevisiae (strain ATCC 204508 / S288c) (Baker's yeast).